A 1162-amino-acid polypeptide reads, in one-letter code: Sialidase (1162 aa).

BNR repeat units follow at residues 23 to 34 (KYSVDDGETWET), 163 to 174 (FYSEDDGKTWKF), and 209 to 220 (YESSDMEKPWVE). Residues Asn-342 and Asn-394 are each glycosylated (N-linked (GlcNAc...) asparagine). Residues 587-1123 (HMDSSSDSSA…STPSTPAGSS (537 aa)) are disordered. Positions 589–615 (DSSSDSSAHSTPSTPADSSAHSTPSTP) are enriched in low complexity. Residues 589–1120 (DSSSDSSAHS…SAHSTPSTPA (532 aa)) are 44 X 12 AA tandem repeats, LTR domain. Composition is skewed to polar residues over residues 616–689 (VDSS…TPVD) and 699–1123 (PADS…AGSS). A glycan (N-linked (GlcNAc...) asparagine) is linked at Asn-1125.

It belongs to the glycosyl hydrolase 33 family.

Its subcellular location is the cell membrane. The catalysed reaction is Hydrolysis of alpha-(2-&gt;3)-, alpha-(2-&gt;6)-, alpha-(2-&gt;8)- glycosidic linkages of terminal sialic acid residues in oligosaccharides, glycoproteins, glycolipids, colominic acid and synthetic substrates.. Developmentally regulated neuraminidase implicated in parasite invasion of cells. The protein is Sialidase (TCNA) of Trypanosoma cruzi.